The primary structure comprises 1472 residues: Type IV pilus biogenesis factor PilY1 homolog PD_1611 (1472 aa).

Asp-1170, Asp-1172, Asp-1174, Leu-1176, and Asp-1178 together coordinate Ca(2+). Polar residues predominate over residues Arg-1383 to Val-1397. The disordered stretch occupies residues Arg-1383–Ala-1403.

It belongs to the PilY1 family.

It localises to the fimbrium. In terms of biological role, one of the three PilY1 homologs of X.fastidiosa, which are involved in bacterial twitching motility as component of the filamentous type IV pili (T4P). The twitching motility of this protein is enhanced by calcium, which may provide the bacterium an adaptive advantage in environments with high calcium concentrations. In Xylella fastidiosa (strain Temecula1 / ATCC 700964), this protein is Type IV pilus biogenesis factor PilY1 homolog PD_1611.